The following is a 311-amino-acid chain: Mycinamicin-resistance protein MyrB (311 aa).

Residues Asn27, Leu29, Gly54, Glu75, and Asp98 each contribute to the S-adenosyl-L-methionine site. The disordered stretch occupies residues 272–311 (PAPAGRSVRARPGSVGPDRSLPPRGLRSGPPRARRRGGGA). Residues 293-302 (PPRGLRSGPP) are compositionally biased toward low complexity.

Belongs to the class I-like SAM-binding methyltransferase superfamily. rRNA adenine N(6)-methyltransferase family.

In terms of biological role, confers resistance to macrolide, lincosamide and streptogramin B antibiotics. This is Mycinamicin-resistance protein MyrB (myrB) from Micromonospora griseorubida.